The following is a 388-amino-acid chain: Flavin-dependent monooxygenase (388 aa).

FAD-binding positions include 12-15 (VGVA), 34-36 (EKS), 44-47 (QALD), R105, Y267, D289, and 296-302 (PLSGQGN).

This sequence belongs to the aromatic-ring hydroxylase family. FAD serves as cofactor.

The catalysed reaction is a tetracycline + NADPH + O2 + H(+) = a (1S,10aS)-3-(CONH2)-1-(Me2N)-3,3a,4,6-(HO)4-2,5-dioxo-1H,10aH,11H,11aH-cyclopenta[b]anthracene + CO + NADP(+) + H2O. It catalyses the reaction 7-chlorotetracycline + NADPH + O2 + H(+) = (1S,10S,10aS)-3-(CONH2)-9-Cl-1-(Me2N)-3,3a,4,10-(HO)4-10-Me-2,5-dioxo-1H,10aH,11H,11aH-cyclopenta[b]anthracen-6-olate + CO + NADP(+) + H2O. Inhibited by anhydrotetracycline. In terms of biological role, an FAD-requiring monooxygenase active on tetracycline antibiotic and some of its derivatives, which leads to their inactivation. Expression in E.coli confers high resistance to tetracycline and oxytetracycline, does not confer resistance to minocycline or tigecycline. Degrades tetracycline and oxytetracycline; the reaction requires NADPH. Degrades and confers resistance to chlortetracycline. The chain is Flavin-dependent monooxygenase (tet(50)) from Unknown prokaryotic organism.